A 303-amino-acid polypeptide reads, in one-letter code: ATP phosphoribosyltransferase (303 aa).

The protein belongs to the ATP phosphoribosyltransferase family. Long subfamily. Mg(2+) is required as a cofactor.

It is found in the cytoplasm. It catalyses the reaction 1-(5-phospho-beta-D-ribosyl)-ATP + diphosphate = 5-phospho-alpha-D-ribose 1-diphosphate + ATP. The protein operates within amino-acid biosynthesis; L-histidine biosynthesis; L-histidine from 5-phospho-alpha-D-ribose 1-diphosphate: step 1/9. Its activity is regulated as follows. Feedback inhibited by histidine. Its function is as follows. Catalyzes the condensation of ATP and 5-phosphoribose 1-diphosphate to form N'-(5'-phosphoribosyl)-ATP (PR-ATP). Has a crucial role in the pathway because the rate of histidine biosynthesis seems to be controlled primarily by regulation of HisG enzymatic activity. In Haemophilus influenzae (strain PittGG), this protein is ATP phosphoribosyltransferase.